Reading from the N-terminus, the 182-residue chain is Probable nicotinate-nucleotide adenylyltransferase (182 aa).

This sequence belongs to the NadD family.

It catalyses the reaction nicotinate beta-D-ribonucleotide + ATP + H(+) = deamido-NAD(+) + diphosphate. It functions in the pathway cofactor biosynthesis; NAD(+) biosynthesis; deamido-NAD(+) from nicotinate D-ribonucleotide: step 1/1. Catalyzes the reversible adenylation of nicotinate mononucleotide (NaMN) to nicotinic acid adenine dinucleotide (NaAD). This chain is Probable nicotinate-nucleotide adenylyltransferase, found in Aliarcobacter butzleri (strain RM4018) (Arcobacter butzleri).